A 727-amino-acid chain; its full sequence is Sodium-dependent neutral amino acid transporter SLC6A17 (727 aa).

At 1 to 68 the chain is on the cytoplasmic side; sequence MPKNSKVTQR…DRPAWNSKLQ (68 aa). Phosphoserine is present on residues serine 13 and serine 20. The chain crosses the membrane as a helical span at residues 69-89; the sequence is YILAQIGFSVGLGNIWRFPYL. Residues 90–96 are Extracellular-facing; that stretch reads CQKNGGG. Residues 97-116 traverse the membrane as a helical segment; it reads AYLVPYLVLLIIIGIPLFFL. At 117–140 the chain is on the cytoplasmic side; that stretch reads ELAVGQRIRRGSIGVWHYVCPRLG. The helical transmembrane segment at 141-161 threads the bilayer; sequence GIGFSSCIVCLFVGLYYNVII. Topologically, residues 162–224 are extracellular; sequence GWSVFYFFKS…NSISESGGLN (63 aa). Asparagine 186 is a glycosylation site (N-linked (GlcNAc...) asparagine). A helical membrane pass occupies residues 225 to 243; that stretch reads WKMTVCLLVAWSIVGMAVV. Residues 244–251 are Cytoplasmic-facing; it reads KGIQSSGK. A helical membrane pass occupies residues 252 to 269; that stretch reads VMYFSSLFPYVVLACFLV. Topologically, residues 270–304 are extracellular; the sequence is RGLLLRGAVDGILHMFTPKLDKMLDPQVWREAATQ. Residues 305 to 322 form a helical membrane-spanning segment; it reads VFFALGLGFGGVIAFSSY. The Cytoplasmic portion of the chain corresponds to 323-333; the sequence is NKQDNNCHFDA. A helical transmembrane segment spans residues 334 to 355; sequence ALVSFINFFTSVLATLVVFAVL. Over 356-451 the chain is Extracellular; sequence GFKANIMNEK…FIAFTEAMTH (96 aa). Tyrosine 377 carries the post-translational modification Phosphotyrosine. Asparagine 393 carries N-linked (GlcNAc...) asparagine glycosylation. A helical membrane pass occupies residues 452–471; that stretch reads FPASPFWSVMFFLMLINLGL. At 472-494 the chain is on the cytoplasmic side; sequence GSMIGTMAGITTPIIDTFKVPKE. A helical transmembrane segment spans residues 495-513; it reads MFTVGCCVFAFFVGLLFVQ. The Extracellular segment spans residues 514 to 528; it reads RSGNYFVTMFDDYSA. A helical membrane pass occupies residues 529–549; sequence TLPLTVIVILENIAVAWIYGT. Residues 550–569 lie on the Cytoplasmic side of the membrane; the sequence is KKFMQELTEMLGFRPYRFYF. A helical membrane pass occupies residues 570-591; sequence YMWKFVSPLCMAVLTTASIIQL. Residues 592–618 are Extracellular-facing; it reads GVSPPGYSAWIKEEAAERYLYFPNWAM. The chain crosses the membrane as a helical span at residues 619 to 641; it reads ALLITLIAVATLPIPVVFILRHF. Over 642–727 the chain is Cytoplasmic; it reads HLLSDGSNTL…LLASTPESEL (86 aa). A phosphoserine mark is found at serine 665 and serine 701. The tract at residues 680 to 727 is disordered; that stretch reads VPSEAPSPMPTHRSYLGPGSTSPLESSSHPNGRYGSGYLLASTPESEL. Over residues 698 to 709 the composition is skewed to polar residues; sequence GSTSPLESSSHP.

Belongs to the sodium:neurotransmitter symporter (SNF) (TC 2.A.22) family. In terms of tissue distribution, found exclusively in the central nervous system and is more abundant in the cerebellum and the cerebral cortex. Expressed in PC-12 cell line.

It localises to the cytoplasmic vesicle. The protein resides in the secretory vesicle. The protein localises to the synaptic vesicle membrane. It is found in the postsynapse. Its subcellular location is the presynapse. The enzyme catalyses L-proline(in) + Na(+)(in) = L-proline(out) + Na(+)(out). The catalysed reaction is L-leucine(in) + Na(+)(in) = L-leucine(out) + Na(+)(out). It carries out the reaction glycine(in) + Na(+)(in) = glycine(out) + Na(+)(out). It catalyses the reaction L-alanine(in) + Na(+)(in) = L-alanine(out) + Na(+)(out). The enzyme catalyses L-glutamine(in) + Na(+)(in) = L-glutamine(out) + Na(+)(out). Its function is as follows. Synaptic vesicle transporter with apparent selectivity for neutral amino acids. The transport is sodium-coupled but chloride-independent, likely driven by the proton electrochemical gradient generated by vacuolar H(+)-ATPase in an overall electrogenic mechanism. May contribute to the synaptic uptake of neurotransmitter precursors in a process coupled in part to vesicle exocytosis. The sequence is that of Sodium-dependent neutral amino acid transporter SLC6A17 from Rattus norvegicus (Rat).